Consider the following 591-residue polypeptide: MRSHYCGNLNKSLAGQTVELCGWVNRRRDLGGLIFIDMRDREGVVQVVVDPDMKDIFSTANQLRNEFCIKFTGEVRVRPDSQVNKDMSTGEVELYATGLEIINRSEALPLDFNQTNSEEQRLKYRYIDLRRPEMSDRIKLRARASSFVRRFLDENLFLDIETPVLTKATPEGARDYLVPSRVHKGSFYALPQSPQLFKQLLMMSGFDRYYQIVKCFRDEDLRADRQPEFTQIDIETSFLSSNQVRDITERLVHDMWKELLDVELGQFPIMKFSEAIRRFGSDKPDLRNPLELVDIADLLKDVEFQVFAGPANDEKGRVAVIRVPGGASLSRKQIDEYGKFVGIYGAKGLAWMKVNDRAAGLEGVQSPVAKFLNADVVNGILERTEAESGDIILFGADKANIVSEAMGALRIKLGDDLELTDKKAWAPLWVIDFPMFEEDGEGNLHAMHHPFTSPLGMTAEELKVNPAAANSDAYDMVINGYEVGGGSVRIHNAEMQTAVFGILGIEAKEQQEKFGFLLEALKYGTPPHAGLAFGLDRLAMLLCGTENIRDVIAFPKTTAAACLLTNAPSPANPDSLAELAIAVKFAEKKDA.

E171 serves as a coordination point for L-aspartate. The segment at 195–198 (QLFK) is aspartate. Residue R217 coordinates L-aspartate. ATP contacts are provided by residues 217–219 (RDE) and Q226. L-aspartate is bound at residue H448. E482 lines the ATP pocket. R489 is an L-aspartate binding site. 534-537 (GLDR) contacts ATP.

It belongs to the class-II aminoacyl-tRNA synthetase family. Type 1 subfamily. Homodimer.

It is found in the cytoplasm. The catalysed reaction is tRNA(Asp) + L-aspartate + ATP = L-aspartyl-tRNA(Asp) + AMP + diphosphate. Functionally, catalyzes the attachment of L-aspartate to tRNA(Asp) in a two-step reaction: L-aspartate is first activated by ATP to form Asp-AMP and then transferred to the acceptor end of tRNA(Asp). The chain is Aspartate--tRNA ligase from Aliivibrio salmonicida (strain LFI1238) (Vibrio salmonicida (strain LFI1238)).